The sequence spans 416 residues: Acyl-coenzyme A amino acid N-acyltransferase 1 (416 aa).

Ser125 carries the post-translational modification Phosphoserine. Active-site charge relay system residues include Ser235, Asp325, and His359. Ser414 carries the phosphoserine modification. The Microbody targeting signal signature appears at 414–416; sequence SKL.

The protein belongs to the C/M/P thioester hydrolase family. Expressed mainly in liver and kidney with low levels in adrenal and little or no expression in other tissues.

The protein resides in the peroxisome. It carries out the reaction tetracosanoyl-CoA + taurine = N-tetracosanoyl-taurine + CoA + H(+). The enzyme catalyses eicosanoyl-CoA + taurine = N-eicosanoyl-taurine + CoA + H(+). It catalyses the reaction taurine + octadecanoyl-CoA = N-octadecanoyl-taurine + CoA + H(+). The catalysed reaction is taurine + hexadecanoyl-CoA = N-hexadecanoyl-taurine + CoA + H(+). It carries out the reaction tetradecanoyl-CoA + taurine = N-tetradecanoyl-taurine + CoA + H(+). The enzyme catalyses dodecanoyl-CoA + taurine = N-dodecanoyl-taurine + CoA + H(+). Functionally, acyltransferase which efficiently conjugates very long-chain and long-chain fatty acids to taurine. Shows no conjugation activity in the presence of glycine. The sequence is that of Acyl-coenzyme A amino acid N-acyltransferase 1 from Mus musculus (Mouse).